A 190-amino-acid polypeptide reads, in one-letter code: 6,7-dimethyl-8-ribityllumazine synthase (190 aa).

5-amino-6-(D-ribitylamino)uracil is bound by residues Phe23, Ser61–Glu63, and Ala85–Ile87. Residue Gln90–Thr91 participates in (2S)-2-hydroxy-3-oxobutyl phosphate binding. His93 acts as the Proton donor in catalysis. 5-amino-6-(D-ribitylamino)uracil is bound at residue Phe118. Arg132 is a binding site for (2S)-2-hydroxy-3-oxobutyl phosphate.

Belongs to the DMRL synthase family.

The enzyme catalyses (2S)-2-hydroxy-3-oxobutyl phosphate + 5-amino-6-(D-ribitylamino)uracil = 6,7-dimethyl-8-(1-D-ribityl)lumazine + phosphate + 2 H2O + H(+). It participates in cofactor biosynthesis; riboflavin biosynthesis; riboflavin from 2-hydroxy-3-oxobutyl phosphate and 5-amino-6-(D-ribitylamino)uracil: step 1/2. In terms of biological role, catalyzes the formation of 6,7-dimethyl-8-ribityllumazine by condensation of 5-amino-6-(D-ribitylamino)uracil with 3,4-dihydroxy-2-butanone 4-phosphate. This is the penultimate step in the biosynthesis of riboflavin. In Nostoc sp. (strain PCC 7120 / SAG 25.82 / UTEX 2576), this protein is 6,7-dimethyl-8-ribityllumazine synthase.